We begin with the raw amino-acid sequence, 156 residues long: ATP synthase subunit b (156 aa).

Residues 5–25 (LTLIGQAIAFAFFVAFCMKFV) traverse the membrane as a helical segment.

This sequence belongs to the ATPase B chain family. As to quaternary structure, F-type ATPases have 2 components, F(1) - the catalytic core - and F(0) - the membrane proton channel. F(1) has five subunits: alpha(3), beta(3), gamma(1), delta(1), epsilon(1). F(0) has three main subunits: a(1), b(2) and c(10-14). The alpha and beta chains form an alternating ring which encloses part of the gamma chain. F(1) is attached to F(0) by a central stalk formed by the gamma and epsilon chains, while a peripheral stalk is formed by the delta and b chains.

It is found in the cell inner membrane. F(1)F(0) ATP synthase produces ATP from ADP in the presence of a proton or sodium gradient. F-type ATPases consist of two structural domains, F(1) containing the extramembraneous catalytic core and F(0) containing the membrane proton channel, linked together by a central stalk and a peripheral stalk. During catalysis, ATP synthesis in the catalytic domain of F(1) is coupled via a rotary mechanism of the central stalk subunits to proton translocation. Functionally, component of the F(0) channel, it forms part of the peripheral stalk, linking F(1) to F(0). The polypeptide is ATP synthase subunit b (Acinetobacter baumannii (strain AYE)).